The chain runs to 208 residues: Thiamine-phosphate synthase (208 aa).

4-amino-2-methyl-5-(diphosphooxymethyl)pyrimidine-binding positions include 37-41 (QYREK) and asparagine 73. Residues aspartate 74 and aspartate 93 each coordinate Mg(2+). Serine 112 serves as a coordination point for 4-amino-2-methyl-5-(diphosphooxymethyl)pyrimidine. Position 139 to 141 (139 to 141 (TIS)) interacts with 2-[(2R,5Z)-2-carboxy-4-methylthiazol-5(2H)-ylidene]ethyl phosphate. Lysine 142 contributes to the 4-amino-2-methyl-5-(diphosphooxymethyl)pyrimidine binding site. 2-[(2R,5Z)-2-carboxy-4-methylthiazol-5(2H)-ylidene]ethyl phosphate-binding positions include glycine 171 and 191 to 192 (IS).

The protein belongs to the thiamine-phosphate synthase family. Mg(2+) is required as a cofactor.

It carries out the reaction 2-[(2R,5Z)-2-carboxy-4-methylthiazol-5(2H)-ylidene]ethyl phosphate + 4-amino-2-methyl-5-(diphosphooxymethyl)pyrimidine + 2 H(+) = thiamine phosphate + CO2 + diphosphate. The enzyme catalyses 2-(2-carboxy-4-methylthiazol-5-yl)ethyl phosphate + 4-amino-2-methyl-5-(diphosphooxymethyl)pyrimidine + 2 H(+) = thiamine phosphate + CO2 + diphosphate. It catalyses the reaction 4-methyl-5-(2-phosphooxyethyl)-thiazole + 4-amino-2-methyl-5-(diphosphooxymethyl)pyrimidine + H(+) = thiamine phosphate + diphosphate. The protein operates within cofactor biosynthesis; thiamine diphosphate biosynthesis; thiamine phosphate from 4-amino-2-methyl-5-diphosphomethylpyrimidine and 4-methyl-5-(2-phosphoethyl)-thiazole: step 1/1. Its function is as follows. Condenses 4-methyl-5-(beta-hydroxyethyl)thiazole monophosphate (THZ-P) and 2-methyl-4-amino-5-hydroxymethyl pyrimidine pyrophosphate (HMP-PP) to form thiamine monophosphate (TMP). The protein is Thiamine-phosphate synthase of Listeria welshimeri serovar 6b (strain ATCC 35897 / DSM 20650 / CCUG 15529 / CIP 8149 / NCTC 11857 / SLCC 5334 / V8).